A 203-amino-acid polypeptide reads, in one-letter code: ATP-dependent dethiobiotin synthetase BioD (203 aa).

Position 11 to 16 (Asn-11 to Ile-16) interacts with ATP. Thr-15 lines the Mg(2+) pocket. Lys-31 is an active-site residue. Thr-35 provides a ligand contact to substrate. ATP is bound by residues Asp-42 and Glu-94–Gly-97. Asp-42 and Glu-94 together coordinate Mg(2+).

The protein belongs to the dethiobiotin synthetase family. Homodimer. Requires Mg(2+) as cofactor.

It localises to the cytoplasm. It carries out the reaction (7R,8S)-7,8-diammoniononanoate + CO2 + ATP = (4R,5S)-dethiobiotin + ADP + phosphate + 3 H(+). Its pathway is cofactor biosynthesis; biotin biosynthesis; biotin from 7,8-diaminononanoate: step 1/2. In terms of biological role, catalyzes a mechanistically unusual reaction, the ATP-dependent insertion of CO2 between the N7 and N8 nitrogen atoms of 7,8-diaminopelargonic acid (DAPA, also called 7,8-diammoniononanoate) to form a ureido ring. The sequence is that of ATP-dependent dethiobiotin synthetase BioD from Lawsonia intracellularis (strain PHE/MN1-00).